The primary structure comprises 588 residues: Proline--tRNA ligase (588 aa).

It belongs to the class-II aminoacyl-tRNA synthetase family. ProS type 1 subfamily. Homodimer.

It localises to the cytoplasm. The enzyme catalyses tRNA(Pro) + L-proline + ATP = L-prolyl-tRNA(Pro) + AMP + diphosphate. Catalyzes the attachment of proline to tRNA(Pro) in a two-step reaction: proline is first activated by ATP to form Pro-AMP and then transferred to the acceptor end of tRNA(Pro). As ProRS can inadvertently accommodate and process non-cognate amino acids such as alanine and cysteine, to avoid such errors it has two additional distinct editing activities against alanine. One activity is designated as 'pretransfer' editing and involves the tRNA(Pro)-independent hydrolysis of activated Ala-AMP. The other activity is designated 'posttransfer' editing and involves deacylation of mischarged Ala-tRNA(Pro). The misacylated Cys-tRNA(Pro) is not edited by ProRS. This Corynebacterium glutamicum (strain R) protein is Proline--tRNA ligase.